Here is a 523-residue protein sequence, read N- to C-terminus: Probable aminopeptidase NPEPL1 (523 aa).

The Zn(2+) site is built by Lys260 and Asp265. Residue Lys272 is part of the active site. Zn(2+) is bound by residues Asp283, Asp342, and Glu344. The active site involves Arg346.

It belongs to the peptidase M17 family. Requires Zn(2+) as cofactor. It depends on Mn(2+) as a cofactor. As to expression, ubiquitously expressed.

Its function is as follows. Probably catalyzes the removal of unsubstituted N-terminal amino acids from various peptides. The protein is Probable aminopeptidase NPEPL1 (NPEPL1) of Homo sapiens (Human).